A 549-amino-acid polypeptide reads, in one-letter code: Chaperonin GroEL (549 aa).

Residues 30 to 33, K51, 87 to 91, G415, and D496 each bind ATP; these read TLGP and DGTTT.

It belongs to the chaperonin (HSP60) family. As to quaternary structure, forms a cylinder of 14 subunits composed of two heptameric rings stacked back-to-back. Interacts with the co-chaperonin GroES.

It is found in the cytoplasm. The catalysed reaction is ATP + H2O + a folded polypeptide = ADP + phosphate + an unfolded polypeptide.. In terms of biological role, together with its co-chaperonin GroES, plays an essential role in assisting protein folding. The GroEL-GroES system forms a nano-cage that allows encapsulation of the non-native substrate proteins and provides a physical environment optimized to promote and accelerate protein folding. This is Chaperonin GroEL from Acidiphilium cryptum (strain JF-5).